The primary structure comprises 578 residues: Arginine--tRNA ligase (578 aa).

Residues 127–137 carry the 'HIGH' region motif; that stretch reads PNLAKEMHVGH.

Belongs to the class-I aminoacyl-tRNA synthetase family. In terms of assembly, monomer.

It is found in the cytoplasm. The catalysed reaction is tRNA(Arg) + L-arginine + ATP = L-arginyl-tRNA(Arg) + AMP + diphosphate. This Pseudomonas putida (strain ATCC 47054 / DSM 6125 / CFBP 8728 / NCIMB 11950 / KT2440) protein is Arginine--tRNA ligase.